We begin with the raw amino-acid sequence, 221 residues long: 7-cyano-7-deazaguanine synthase (221 aa).

ATP is bound at residue 8 to 18; that stretch reads LSGGMDSAAVI. Residues C186, C196, C199, and C202 each contribute to the Zn(2+) site.

The protein belongs to the QueC family. Zn(2+) serves as cofactor.

The enzyme catalyses 7-carboxy-7-deazaguanine + NH4(+) + ATP = 7-cyano-7-deazaguanine + ADP + phosphate + H2O + H(+). The protein operates within purine metabolism; 7-cyano-7-deazaguanine biosynthesis. Catalyzes the ATP-dependent conversion of 7-carboxy-7-deazaguanine (CDG) to 7-cyano-7-deazaguanine (preQ(0)). The polypeptide is 7-cyano-7-deazaguanine synthase (Stenotrophomonas maltophilia (strain K279a)).